The chain runs to 486 residues: Receptor-interacting serine/threonine-protein kinase 3 (486 aa).

S2 carries the phosphoserine modification. In terms of domain architecture, Protein kinase spans 22-292 (LKKLEFVGKG…DCEPKTNEVY (271 aa)). ATP-binding positions include 28 to 36 (VGKGGFGVV) and K51. The active-site Proton acceptor is the D143. S165 carries the phosphoserine modification. Residue T187 is modified to Phosphothreonine. S204 is modified (phosphoserine; by autocatalysis). T231 carries the post-translational modification Phosphothreonine; by autocatalysis. At S232 the chain carries Phosphoserine; by autocatalysis. Position 257 is a phosphothreonine (T257). 2 positions are modified to phosphoserine: S304 and S326. The interval 312–333 (QHRSSGRNLSAREPSQRGTEMD) is disordered. T338 bears the Phosphothreonine mark. A disordered region spans residues 349–388 (LEEPSGPVPGKCPERQAQDTSVGPATPARTSSDPVAGTPQ). Phosphoserine occurs at positions 353, 369, and 380. Positions 366–381 (QDTSVGPATPARTSSD) are enriched in polar residues. T392 bears the Phosphothreonine mark. Positions 440–461 (LVFNNCSEVQIGNYNSLVAPPR) match the RIP homotypic interaction motif (RHIM) motif. A disordered region spans residues 462–486 (TTASSSAKYDQAQFGRGRGWQPFHK). R477 carries the omega-N-methylarginine modification.

This sequence belongs to the protein kinase superfamily. TKL Ser/Thr protein kinase family. As to quaternary structure, interacts (via RIP homotypic interaction motif) with RIPK1 (via RIP homotypic interaction motif); this interaction induces RIPK1 phosphorylation and formation of a RIPK1-RIPK3 necrosis-inducing complex. Interacts with MLKL; the interaction is direct and triggers necroptosis. Interacts with ZBP1 (via RIP homotypic interaction motif); interaction with ZBP1 activates RIPK3, triggering necroptosis. Upon TNF-induced necrosis, the RIPK1-RIPK3 dimer further interacts with PGAM5 and MLKL; the formation of this complex leads to PGAM5 phosphorylation and increase in PGAM5 phosphatase activity. Binds TRAF2 and is recruited to the TNFR-1 signaling complex. Interacts with PYGL, GLUL and GLUD1; these interactions result in activation of these metabolic enzymes. Interacts with BIRC2/c-IAP1, BIRC3/c-IAP2 and XIAP/BIRC4. Interacts with ARHGEF2. Interacts with PELI1 (via atypical FHA domain); the phosphorylated form at Thr-187 binds preferentially to PELI1. Interacts with BUB1B, TRAF2 and STUB1. Interacts with CASP6. Component of the AIM2 PANoptosome complex, a multiprotein complex that drives inflammatory cell death (PANoptosis). (Microbial infection) Interacts (via RIP homotypic interaction motif) with murid herpesvirus protein RIR1; this interaction disrupts RIP3-RIP1 interactions characteristic of TNF-alpha induced necroptosis, thereby suppressing this death pathway. RIPK1 and RIPK3 undergo reciprocal auto- and trans-phosphorylation. Autophosphorylated following interaction with ZBP1. Phosphorylation of Ser-204 plays a role in the necroptotic function of RIPK3. Autophosphorylates at Thr-231 and Ser-232 following activation by ZBP1: phosphorylation at these sites is a hallmark of necroptosis and is required for binding MLKL. Phosphorylation at Thr-187 is important for its kinase activity, interaction with PELI1 and for its ability to mediate TNF-induced necroptosis. Post-translationally, polyubiquitinated with 'Lys-48' and 'Lys-63'-linked chains by BIRC2/c-IAP1 and BIRC3/c-IAP2, leading to activation of NF-kappa-B. Ubiquitinated by STUB1 leading to its subsequent proteasome-dependent degradation. In terms of tissue distribution, expressed in embryo and in adult spleen, liver, testis, heart, brain and lung.

It is found in the cytoplasm. The protein localises to the cytosol. The protein resides in the nucleus. The catalysed reaction is L-seryl-[protein] + ATP = O-phospho-L-seryl-[protein] + ADP + H(+). It carries out the reaction L-threonyl-[protein] + ATP = O-phospho-L-threonyl-[protein] + ADP + H(+). With respect to regulation, activity is stimulated by ZBP1, which senses double-stranded Z-RNA structures. RIPK3-dependent necroptosis is inhibited by RIPK1: RIPK1 prevents the ZBP1-induced activation of RIPK3 via FADD-mediated recruitment of CASP8, which cleaves RIPK1 and limits TNF-induced necroptosis. Inhibited by type II inhibitor 1-(4-fluorophenyl)-N-[3-fluoro-4-(1H-pyrrolo[2,3-b]pyridin-4-yloxy)phenyl]-2-oxo-1,2-dihydropyridine-3-carboxamide. In terms of biological role, serine/threonine-protein kinase that activates necroptosis and apoptosis, two parallel forms of cell death. Necroptosis, a programmed cell death process in response to death-inducing TNF-alpha family members, is triggered by RIPK3 following activation by ZBP1. Activated RIPK3 forms a necrosis-inducing complex and mediates phosphorylation of MLKL, promoting MLKL localization to the plasma membrane and execution of programmed necrosis characterized by calcium influx and plasma membrane damage. In addition to TNF-induced necroptosis, necroptosis can also take place in the nucleus in response to orthomyxoviruses infection: following ZBP1 activation, which senses double-stranded Z-RNA structures, nuclear RIPK3 catalyzes phosphorylation and activation of MLKL, promoting disruption of the nuclear envelope and leakage of cellular DNA into the cytosol. Also regulates apoptosis: apoptosis depends on RIPK1, FADD and CASP8, and is independent of MLKL and RIPK3 kinase activity. Phosphorylates RIPK1: RIPK1 and RIPK3 undergo reciprocal auto- and trans-phosphorylation. In some cell types, also able to restrict viral replication by promoting cell death-independent responses. In response to flavivirus infection in neurons, promotes a cell death-independent pathway that restricts viral replication: together with ZBP1, promotes a death-independent transcriptional program that modifies the cellular metabolism via up-regulation expression of the enzyme ACOD1/IRG1 and production of the metabolite itaconate. Itaconate inhibits the activity of succinate dehydrogenase, generating a metabolic state in neurons that suppresses replication of viral genomes. RIPK3 binds to and enhances the activity of three metabolic enzymes: GLUL, GLUD1, and PYGL. These metabolic enzymes may eventually stimulate the tricarboxylic acid cycle and oxidative phosphorylation, which could result in enhanced ROS production. The polypeptide is Receptor-interacting serine/threonine-protein kinase 3 (Mus musculus (Mouse)).